We begin with the raw amino-acid sequence, 314 residues long: Inosine-uridine preferring nucleoside hydrolase (314 aa).

Asp10 is a Ca(2+) binding site. Asp14 is a binding site for substrate. Ca(2+)-binding residues include Asp15 and Thr126. Substrate contacts are provided by Asn160, Glu166, and Asn168. His240 (proton donor) is an active-site residue. Residue Asp241 participates in Ca(2+) binding.

It belongs to the IUNH family. Homotetramer. Ca(2+) serves as cofactor.

The catalysed reaction is inosine + H2O = hypoxanthine + D-ribose. It carries out the reaction uridine + H2O = D-ribose + uracil. It functions in the pathway purine metabolism; purine nucleoside salvage. Is potently inhibited by immucillin A and immucillin ACAP, which are transition state inhibitors. Functionally, catalyzes the hydrolysis of the N-glycosidic bond of all of the commonly occurring purine and pyrimidine nucleosides into ribose and the associated base, but has a preference for inosine and uridine as substrates. Likely functions in purine salvage from the host, a fundamental pathway since protozoan parasites such as L.major are incapable of de novo purine biosynthesis. This is Inosine-uridine preferring nucleoside hydrolase (NSNH) from Leishmania major.